The following is a 343-amino-acid chain: N-acetyl-gamma-glutamyl-phosphate reductase (343 aa).

Residue C147 is part of the active site.

It belongs to the NAGSA dehydrogenase family. Type 1 subfamily.

Its subcellular location is the cytoplasm. The enzyme catalyses N-acetyl-L-glutamate 5-semialdehyde + phosphate + NADP(+) = N-acetyl-L-glutamyl 5-phosphate + NADPH + H(+). The protein operates within amino-acid biosynthesis; L-arginine biosynthesis; N(2)-acetyl-L-ornithine from L-glutamate: step 3/4. Its function is as follows. Catalyzes the NADPH-dependent reduction of N-acetyl-5-glutamyl phosphate to yield N-acetyl-L-glutamate 5-semialdehyde. The protein is N-acetyl-gamma-glutamyl-phosphate reductase of Staphylococcus aureus (strain USA300).